The primary structure comprises 193 residues: Transmembrane protein 276 (193 aa).

The first 32 residues, 1–32, serve as a signal peptide directing secretion; it reads MTPRPGGEWSSALSHLALGAVSLHAALSTAQA. Helical transmembrane passes span 35–55, 63–83, 89–109, and 114–134; these read GAAA…ASGL, AGAW…FHWV, SANL…HLGA, and VAGQ…AVFT.

The protein localises to the membrane. This chain is Transmembrane protein 276, found in Bos taurus (Bovine).